The primary structure comprises 475 residues: Beta-amyrin 28-monooxygenase (475 aa).

The helical transmembrane segment at 2-22 threads the bilayer; sequence YLTILFLFVSSILLSLMFLLR. C422 contributes to the heme binding site.

The protein belongs to the cytochrome P450 family. Heme is required as a cofactor.

It is found in the membrane. The enzyme catalyses beta-amyrin + 3 reduced [NADPH--hemoprotein reductase] + 3 O2 = oleanolate + 3 oxidized [NADPH--hemoprotein reductase] + 4 H2O + 4 H(+). In terms of biological role, catalyzes the oxidation of the methyl group to a carboxyl group at the C-28 position of beta-amyrin to form oleanolate. This is Beta-amyrin 28-monooxygenase from Barbarea vulgaris (Yellow rocket).